An 886-amino-acid polypeptide reads, in one-letter code: Receptor-like kinase TMK2 (886 aa).

The N-terminal stretch at 1 to 20 (MIAKNFLLLLCFIALVNVES) is a signal peptide. The Extracellular portion of the chain corresponds to 21-460 (SPDEAVMIAL…GKKASSNAGK (440 aa)). N-linked (GlcNAc...) asparagine glycosylation is present at Asn41. A disulfide bridge links Cys48 with Cys56. LRR repeat units lie at residues 59 to 83 (SNRV…LGKL), 84 to 106 (TSLT…LAGL), 107 to 129 (KSLV…FFSG), 131 to 155 (SSLQ…LENA), 157 to 179 (SLVD…LFEG), 182 to 206 (FSSL…FSDS), 208 to 232 (VQVL…LQKM), 233 to 254 (TSLT…DFSG), 255 to 279 (LVSL…LFEL), and 281 to 302 (SLSD…FTAP). N-linked (GlcNAc...) asparagine glycans are attached at residues Asn154, Asn167, and Asn202. A glycan (N-linked (GlcNAc...) asparagine) is linked at Asn237. The N-linked (GlcNAc...) asparagine glycan is linked to Asn298. 2 disulfide bridges follow: Cys315-Cys323 and Cys353-Cys361. LRR repeat units follow at residues 363-386 (GTDI…RFAD), 387-410 (FASL…ELAK), and 411-438 (LSNL…IVNT). N-linked (GlcNAc...) asparagine glycans are attached at residues Asn377, Asn394, Asn401, Asn432, and Asn437. Residues 461 to 481 (IVGSVIGILLALLLIGVAIFF) traverse the membrane as a helical segment. The Cytoplasmic segment spans residues 482–886 (LVKKKMQYHK…ESTFKSGQGR (405 aa)). One can recognise a Protein kinase domain in the interval 547–827 (FDEKNILGRG…HVVNVLVSLV (281 aa)). ATP contacts are provided by residues 553–561 (LGRGGFGIV) and Lys575. The Proton acceptor role is filled by Asp676.

The protein belongs to the protein kinase superfamily. Ser/Thr protein kinase family. As to expression, expressed in siliques and flowers.

It is found in the membrane. The catalysed reaction is L-seryl-[protein] + ATP = O-phospho-L-seryl-[protein] + ADP + H(+). The enzyme catalyses L-threonyl-[protein] + ATP = O-phospho-L-threonyl-[protein] + ADP + H(+). Functionally, involved in auxin signal transduction and cell expansion and proliferation regulation. This is Receptor-like kinase TMK2 from Arabidopsis thaliana (Mouse-ear cress).